The chain runs to 243 residues: Small ribosomal subunit protein uS3 (243 aa).

A KH type-2 domain is found at 39-107 (MRKFVMSELK…ETHLNIVEVR (69 aa)). The segment at 214-243 (ASERRAMEGDAQGPASRDRDRDRDRRRDNA) is disordered. Positions 229-243 (SRDRDRDRDRRRDNA) are enriched in basic and acidic residues.

The protein belongs to the universal ribosomal protein uS3 family. Part of the 30S ribosomal subunit. Forms a tight complex with proteins S10 and S14.

Its function is as follows. Binds the lower part of the 30S subunit head. Binds mRNA in the 70S ribosome, positioning it for translation. The chain is Small ribosomal subunit protein uS3 from Rhizobium leguminosarum bv. trifolii (strain WSM2304).